The chain runs to 215 residues: Peptide methionine sulfoxide reductase MsrA (215 aa).

Cysteine 58 is an active-site residue.

Belongs to the MsrA Met sulfoxide reductase family.

The enzyme catalyses L-methionyl-[protein] + [thioredoxin]-disulfide + H2O = L-methionyl-(S)-S-oxide-[protein] + [thioredoxin]-dithiol. It carries out the reaction [thioredoxin]-disulfide + L-methionine + H2O = L-methionine (S)-S-oxide + [thioredoxin]-dithiol. In terms of biological role, has an important function as a repair enzyme for proteins that have been inactivated by oxidation. Catalyzes the reversible oxidation-reduction of methionine sulfoxide in proteins to methionine. The protein is Peptide methionine sulfoxide reductase MsrA of Pseudomonas savastanoi pv. phaseolicola (strain 1448A / Race 6) (Pseudomonas syringae pv. phaseolicola (strain 1448A / Race 6)).